The following is a 691-amino-acid chain: DNA ligase (691 aa).

NAD(+) contacts are provided by residues aspartate 53–aspartate 57, serine 102–leucine 103, and glutamate 135. Residue lysine 137 is the N6-AMP-lysine intermediate of the active site. Residues arginine 158, glutamate 195, lysine 310, and lysine 334 each coordinate NAD(+). Zn(2+) is bound by residues cysteine 428, cysteine 431, cysteine 446, and cysteine 452. In terms of domain architecture, BRCT spans serine 613–glutamate 691.

Belongs to the NAD-dependent DNA ligase family. LigA subfamily. Mg(2+) is required as a cofactor. It depends on Mn(2+) as a cofactor.

It catalyses the reaction NAD(+) + (deoxyribonucleotide)n-3'-hydroxyl + 5'-phospho-(deoxyribonucleotide)m = (deoxyribonucleotide)n+m + AMP + beta-nicotinamide D-nucleotide.. In terms of biological role, DNA ligase that catalyzes the formation of phosphodiester linkages between 5'-phosphoryl and 3'-hydroxyl groups in double-stranded DNA using NAD as a coenzyme and as the energy source for the reaction. It is essential for DNA replication and repair of damaged DNA. This is DNA ligase from Psychrobacter cryohalolentis (strain ATCC BAA-1226 / DSM 17306 / VKM B-2378 / K5).